A 100-amino-acid chain; its full sequence is Urease subunit gamma (100 aa).

It belongs to the urease gamma subunit family. Heterotrimer of UreA (gamma), UreB (beta) and UreC (alpha) subunits. Three heterotrimers associate to form the active enzyme.

Its subcellular location is the cytoplasm. It catalyses the reaction urea + 2 H2O + H(+) = hydrogencarbonate + 2 NH4(+). The protein operates within nitrogen metabolism; urea degradation; CO(2) and NH(3) from urea (urease route): step 1/1. This Bacillus cereus (strain ATCC 10987 / NRS 248) protein is Urease subunit gamma.